A 212-amino-acid polypeptide reads, in one-letter code: MNSRLIVTGTDTGIGKTVFSAALCHALGAVYWKPVQSGLEEETDSEIVARLAQASPQRILPEAWRLNTPASPHLSARLDGVEIRPEEMHIPATSLPLVIEGAGGLLVPLNDKTLFADLFAIWRIPAILCARAALGTINHTLLSLEAMRSRDIPVLGVAFIGEANEDTETTIAHLGRVKRLGRLPLLDDLSPEKLHHSFARNFHIDDFAGVAR.

G13–V18 contacts ATP. T17 contacts Mg(2+). K33 is a catalytic residue. Residue S37 coordinates substrate. E100 is a Mg(2+) binding site. Residues E100–G103 and P184–L186 contribute to the ATP site.

It belongs to the dethiobiotin synthetase family. As to quaternary structure, homodimer. It depends on Mg(2+) as a cofactor.

It localises to the cytoplasm. It carries out the reaction (7R,8S)-7,8-diammoniononanoate + CO2 + ATP = (4R,5S)-dethiobiotin + ADP + phosphate + 3 H(+). It participates in cofactor biosynthesis; biotin biosynthesis; biotin from 7,8-diaminononanoate: step 1/2. Its function is as follows. Catalyzes a mechanistically unusual reaction, the ATP-dependent insertion of CO2 between the N7 and N8 nitrogen atoms of 7,8-diaminopelargonic acid (DAPA, also called 7,8-diammoniononanoate) to form a ureido ring. This Brucella melitensis biotype 2 (strain ATCC 23457) protein is ATP-dependent dethiobiotin synthetase BioD.